The chain runs to 162 residues: Ribosomal RNA large subunit methyltransferase H (162 aa).

Gly-108 serves as a coordination point for S-adenosyl-L-methionine.

The protein belongs to the RNA methyltransferase RlmH family. As to quaternary structure, homodimer.

The protein localises to the cytoplasm. The catalysed reaction is pseudouridine(1915) in 23S rRNA + S-adenosyl-L-methionine = N(3)-methylpseudouridine(1915) in 23S rRNA + S-adenosyl-L-homocysteine + H(+). Functionally, specifically methylates the pseudouridine at position 1915 (m3Psi1915) in 23S rRNA. This Methylobacterium nodulans (strain LMG 21967 / CNCM I-2342 / ORS 2060) protein is Ribosomal RNA large subunit methyltransferase H.